The chain runs to 330 residues: Phosphate acyltransferase (330 aa).

Belongs to the PlsX family. In terms of assembly, homodimer. Probably interacts with PlsY.

The protein resides in the cytoplasm. The enzyme catalyses a fatty acyl-[ACP] + phosphate = an acyl phosphate + holo-[ACP]. It participates in lipid metabolism; phospholipid metabolism. Catalyzes the reversible formation of acyl-phosphate (acyl-PO(4)) from acyl-[acyl-carrier-protein] (acyl-ACP). This enzyme utilizes acyl-ACP as fatty acyl donor, but not acyl-CoA. The sequence is that of Phosphate acyltransferase from Bacillus cereus (strain ATCC 14579 / DSM 31 / CCUG 7414 / JCM 2152 / NBRC 15305 / NCIMB 9373 / NCTC 2599 / NRRL B-3711).